Reading from the N-terminus, the 204-residue chain is NADH-ubiquinone oxidoreductase subunit 9 (204 aa).

This sequence belongs to the complex I 30 kDa subunit family. In terms of assembly, complex I is composed of about 30 different subunits.

It is found in the mitochondrion inner membrane. The enzyme catalyses a ubiquinone + NADH + 5 H(+)(in) = a ubiquinol + NAD(+) + 4 H(+)(out). Its function is as follows. Core subunit of the mitochondrial membrane respiratory chain NADH dehydrogenase (Complex I) that is believed to belong to the minimal assembly required for catalysis. Complex I functions in the transfer of electrons from NADH to the respiratory chain. The immediate electron acceptor for the enzyme is believed to be ubiquinone. The sequence is that of NADH-ubiquinone oxidoreductase subunit 9 (NAD9) from Reclinomonas americana.